Consider the following 684-residue polypeptide: Glycine--tRNA ligase beta subunit (684 aa).

The protein belongs to the class-II aminoacyl-tRNA synthetase family. Tetramer of two alpha and two beta subunits.

Its subcellular location is the cytoplasm. The enzyme catalyses tRNA(Gly) + glycine + ATP = glycyl-tRNA(Gly) + AMP + diphosphate. This is Glycine--tRNA ligase beta subunit from Stutzerimonas stutzeri (strain A1501) (Pseudomonas stutzeri).